The following is a 478-amino-acid chain: Metalloendopeptidase OMA1, mitochondrial (478 aa).

Residues L134–F164 form a stress-sensor region region. The helical transmembrane segment at H163–L183 threads the bilayer. H296 is a binding site for Zn(2+). The active site involves E297. Residues H300 and E361 each contribute to the Zn(2+) site. C376 and C434 are joined by a disulfide.

The protein belongs to the peptidase M48 family. Homooligomer. It depends on Zn(2+) as a cofactor. Post-translationally, autocatalytically cleaved in response to mitochondrial depolarization both at the N-terminus and C-terminus to generate the short active form (S-OMA1). The S-OMA1 form is unstable. In terms of processing, may form a redox-dependent disulfide bond. Exists in a semi-oxidized state and is activated by prolonged hypoxia.

It localises to the mitochondrion inner membrane. With respect to regulation, protease activity is activated upon autocatalytic cleavage in response to mitochondrial depolarization. Metalloprotease that is part of the quality control system in the inner membrane of mitochondria. Activated in response to various mitochondrial stress, leading to the proteolytic cleavage of target proteins, such as opa1 and dele1. Involved in the fusion of the mitochondrial inner membranes by mediating cleavage of opa1 at S1 position, generating the soluble opa1 (S-opa1), which cooperates with the membrane form (L-opa1) to coordinate the fusion of mitochondrial inner membranes. Following stress conditions that induce loss of mitochondrial membrane potential, mediates cleavage of opa1, leading to excess production of soluble opa1 (S-opa1) and negative regulation of mitochondrial fusion. Also acts as an activator of the integrated stress response (ISR): in response to mitochondrial stress, mediates cleavage of dele1 to generate the processed form of dele1 (S-DELE1), which translocates to the cytosol and activates eif2ak1/hri to trigger the ISR. Required for the stability of the respiratory supercomplexes. This chain is Metalloendopeptidase OMA1, mitochondrial, found in Danio rerio (Zebrafish).